The chain runs to 28 residues: Chassatide C11 (28 aa).

Intrachain disulfides connect cysteine 3-cysteine 19, cysteine 7-cysteine 21, and cysteine 12-cysteine 26. Methionine 16 is modified (methionine sulfoxide; in form chassatide chaC11A).

This sequence belongs to the cyclotide family. Bracelet subfamily. In terms of tissue distribution, expressed in fruit, pedicel and stem but not in leaf and root (at protein level).

Functionally, chassatide C11: Probably participates in a plant defense mechanism. Active against E.coli ATCC 25922 (MIC=8.5 uM) but not against S.aureus ATCC 12600 or S.epidermidis ATCC 14990. Has cytotoxic and hemolytic activity. Chassatide C11A: Probably participates in a plant defense mechanism. Has no activity against bacteria up to a concentration of 80 uM. Has no cytotoxic and no hemolytic activity. The chain is Chassatide C11 from Chassalia chartacea (Chassalia curviflora).